A 671-amino-acid chain; its full sequence is UvrABC system protein B (671 aa).

The Helicase ATP-binding domain maps to 25 to 178; the sequence is EGIKKGYKHQ…DAMLKKLVEI (154 aa). Residue 38-45 coordinates ATP; the sequence is GVTGSGKT. The short motif at 91-114 is the Beta-hairpin element; it reads YYDYYQPEAYIPETDTYIEKDALI. A Helicase C-terminal domain is found at 435–601; it reads QVEDLLEEIH…TVKSKIKDIL (167 aa). The UVR domain occupies 626-661; that stretch reads EETIKKLEQEMKHAAENLEFEKAAEIRDKIFKIKEK.

Belongs to the UvrB family. In terms of assembly, forms a heterotetramer with UvrA during the search for lesions. Interacts with UvrC in an incision complex.

The protein localises to the cytoplasm. In terms of biological role, the UvrABC repair system catalyzes the recognition and processing of DNA lesions. A damage recognition complex composed of 2 UvrA and 2 UvrB subunits scans DNA for abnormalities. Upon binding of the UvrA(2)B(2) complex to a putative damaged site, the DNA wraps around one UvrB monomer. DNA wrap is dependent on ATP binding by UvrB and probably causes local melting of the DNA helix, facilitating insertion of UvrB beta-hairpin between the DNA strands. Then UvrB probes one DNA strand for the presence of a lesion. If a lesion is found the UvrA subunits dissociate and the UvrB-DNA preincision complex is formed. This complex is subsequently bound by UvrC and the second UvrB is released. If no lesion is found, the DNA wraps around the other UvrB subunit that will check the other stand for damage. The polypeptide is UvrABC system protein B (Thermodesulfovibrio yellowstonii (strain ATCC 51303 / DSM 11347 / YP87)).